Here is a 166-residue protein sequence, read N- to C-terminus: Ureidoglycolate lyase (166 aa).

The protein belongs to the ureidoglycolate lyase family. Homodimer. Ni(2+) serves as cofactor.

It catalyses the reaction (S)-ureidoglycolate = urea + glyoxylate. It participates in nitrogen metabolism; (S)-allantoin degradation. Functionally, catalyzes the catabolism of the allantoin degradation intermediate (S)-ureidoglycolate, generating urea and glyoxylate. Involved in the utilization of allantoin as nitrogen source. The polypeptide is Ureidoglycolate lyase (Rhizobium etli (strain ATCC 51251 / DSM 11541 / JCM 21823 / NBRC 15573 / CFN 42)).